Reading from the N-terminus, the 282-residue chain is Parvulin-like PPIase (282 aa).

The N-terminal stretch at M1 to A20 is a signal peptide. One can recognise a PpiC domain in the interval K138–E231.

Belongs to the PpiC/parvulin rotamase family.

The protein resides in the cell outer membrane. It carries out the reaction [protein]-peptidylproline (omega=180) = [protein]-peptidylproline (omega=0). This chain is Parvulin-like PPIase (plp), found in Rickettsia felis (strain ATCC VR-1525 / URRWXCal2) (Rickettsia azadi).